A 434-amino-acid polypeptide reads, in one-letter code: Adenylosuccinate synthetase (434 aa).

Residues 25 to 31 (GDEGKGK) and 53 to 55 (GHT) each bind GTP. The Proton acceptor role is filled by aspartate 26. Mg(2+)-binding residues include aspartate 26 and glycine 53. Residues 26–29 (DEGK), 51–54 (NAGH), threonine 142, arginine 156, asparagine 233, threonine 248, and arginine 312 each bind IMP. Residue histidine 54 is the Proton donor of the active site. 308 to 314 (VTTGRKR) is a substrate binding site. Residues arginine 314, 340–342 (KLD), and 422–424 (GVG) each bind GTP.

Belongs to the adenylosuccinate synthetase family. As to quaternary structure, homodimer. The cofactor is Mg(2+).

It is found in the cytoplasm. It carries out the reaction IMP + L-aspartate + GTP = N(6)-(1,2-dicarboxyethyl)-AMP + GDP + phosphate + 2 H(+). The protein operates within purine metabolism; AMP biosynthesis via de novo pathway; AMP from IMP: step 1/2. In terms of biological role, plays an important role in the de novo pathway and in the salvage pathway of purine nucleotide biosynthesis. Catalyzes the first committed step in the biosynthesis of AMP from IMP. This chain is Adenylosuccinate synthetase, found in Schizosaccharomyces japonicus (strain yFS275 / FY16936) (Fission yeast).